The sequence spans 259 residues: Ras-related protein Rab-34 (259 aa).

Methionine 1 carries the N-acetylmethionine modification. Residues serine 62, valine 63, glycine 64, lysine 65, threonine 66, aspartate 78, tyrosine 81, and threonine 84 each coordinate GTP. Threonine 66 contributes to the Mg(2+) binding site. The Switch 1 signature appears at 71 to 89; the sequence is RFCKDTFDKNYKATIGVDF. Residues threonine 84 and aspartate 107 each contribute to the Mg(2+) site. The short motif at 108–127 is the Switch 2 element; sequence TAGQERFKCIASTYYRGAQA. Positions 110, 167, 169, and 198 each coordinate GTP. Serine 241 and serine 244 each carry phosphoserine. 2 S-geranylgeranyl cysteine lipidation sites follow: cysteine 257 and cysteine 258.

The protein belongs to the small GTPase superfamily. Rab family. In terms of assembly, interacts with RILP. The GTP-bound form interacts with REP15. Requires Mg(2+) as cofactor.

Its subcellular location is the cytoplasm. It is found in the golgi apparatus. The protein localises to the cytoplasmic vesicle. The protein resides in the phagosome. It localises to the phagosome membrane. Its subcellular location is the cell projection. It is found in the cilium. The protein localises to the cytoskeleton. The protein resides in the microtubule organizing center. It localises to the centrosome. Its subcellular location is the centriole. It carries out the reaction GTP + H2O = GDP + phosphate + H(+). Regulated by guanine nucleotide exchange factors (GEFs) which promote the exchange of bound GDP for free GTP. Regulated by GTPase activating proteins (GAPs) which increase the GTP hydrolysis activity. Inhibited by GDP dissociation inhibitors (GDIs). Its function is as follows. The small GTPases Rab are key regulators of intracellular membrane trafficking, from the formation of transport vesicles to their fusion with membranes. Rabs cycle between an inactive GDP-bound form and an active GTP-bound form that is able to recruit to membranes different sets of downstream effectors directly responsible for vesicle formation, movement, tethering and fusion. RAB34 transports protein involved in the redistribution of lysosomes to the peri-Golgi region. Plays a role in the maturation of phagosomes that engulf pathogens, such as S.aureus and M.tuberculosis. Plays a role in the fusion of phagosomes with lysosomes. Involved in ciliogenesis. In particular, it is required for early steps of the intracellular cilium assembly pathway initiated by trafficking and docking of ciliary vesicles to the centrioles in the cytoplasm, followed by axoneme formation in the cytoplasm. After axoneme elongation, the centrioles migrate close to the cell surface so that ciliary vesicles can fuse with the plasma membrane to expose cilia to the extracellular space. It seems dispensable for ciliogenesis via the extracellular pathway where cilium assembly begins after migration and docking of the centriole to the plasma membrane. Also acts as a positive regulator of hedgehog signaling and regulates ciliary function. This is Ras-related protein Rab-34 from Homo sapiens (Human).